The chain runs to 612 residues: Siderophore iron transporter 1 (612 aa).

A phosphoserine mark is found at serine 5, serine 21, serine 22, serine 36, and serine 41. 14 helical membrane passes run 91 to 111 (ISFY…SFQA), 125 to 145 (FAGH…SAAI), 159 to 179 (LEAF…MAAS), 188 to 208 (GSVL…IFMA), 218 to 238 (LVLG…PRVA), 249 to 269 (WGIA…LAVY), 299 to 319 (IIGL…ISLA), 331 to 351 (FIVM…YEIF), 365 to 385 (EPTI…FYCW), 406 to 426 (YISY…GILI), 434 to 453 (WYFV…MIRY), 464 to 484 (IMPQ…LTVA), 495 to 515 (AIVT…GSAI), and 573 to 593 (ILTS…WFVA).

Belongs to the major facilitator superfamily.

The protein localises to the membrane. Involved in the transport of siderophore iron and so has a role in iron homeostasis. In Schizosaccharomyces pombe (strain 972 / ATCC 24843) (Fission yeast), this protein is Siderophore iron transporter 1 (str1).